We begin with the raw amino-acid sequence, 444 residues long: N-succinylarginine dihydrolase (444 aa).

Substrate contacts are provided by residues 19 to 28 (AGLSFGNVAS), Asn110, and 137 to 138 (HR). Glu174 is an active-site residue. Arg214 is a substrate binding site. His250 is an active-site residue. The substrate site is built by Asp252 and Asn362. Cys368 functions as the Nucleophile in the catalytic mechanism.

It belongs to the succinylarginine dihydrolase family. In terms of assembly, homodimer.

It catalyses the reaction N(2)-succinyl-L-arginine + 2 H2O + 2 H(+) = N(2)-succinyl-L-ornithine + 2 NH4(+) + CO2. The protein operates within amino-acid degradation; L-arginine degradation via AST pathway; L-glutamate and succinate from L-arginine: step 2/5. Catalyzes the hydrolysis of N(2)-succinylarginine into N(2)-succinylornithine, ammonia and CO(2). The sequence is that of N-succinylarginine dihydrolase from Shewanella putrefaciens (strain CN-32 / ATCC BAA-453).